The chain runs to 566 residues: MMTHTLPSEQTRLVPGSDSSSRPKKRRISKRSKIIVSTVVCIGLLLVLVQLAFPSSFALRSASHKKKNVIFFVTDGMGPASLSMARSFNQHVNDLPIDDILTLDEHFIGSSRTRSSDSLVTDSAAGATAFACALKSYNGAIGVDPHHRPCGTVLEAAKLAGYLTGLVVTTRITDATPASFSSHVDYRWQEDLIATHQLGEYPLGRVVDLLMGGGRSHFYPQGEKASPYGHHGARKDGRDLIDEAQSNGWQYVGDRKNFDSLLKSHGENVTLPFLGLFADNDIPFEIDRDEKEYPSLKEQVKVALGALEKASNEDKDSNGFFLMVEGSRIDHAGHQNDPASQVREVLAFDEAFQYVLEFAENSDTETVLVSTSDHETGGLVTSRQVTASYPQYVWYPQVLANATHSGEFLKRKLVDFVHEHKGASSKIENFIKHEILEKDLGIYDYTDSDLETLIHLDDNANAIQDKLNDMVSFRAQIGWTTHGHSAVDVNIYAYANKKATWSYVLNNLQGNHENTEVGQFLENFLELNLNEVTDLIRDTKHTSDFDATEIASEVQHYDEYYHELTN.

The segment covering 1-11 has biased composition (polar residues); that stretch reads MMTHTLPSEQT. Positions 1–27 are disordered; sequence MMTHTLPSEQTRLVPGSDSSSRPKKRR. The Cytoplasmic segment spans residues 1–33; it reads MMTHTLPSEQTRLVPGSDSSSRPKKRRISKRSK. Residues 34-59 form a helical membrane-spanning segment; it reads IIVSTVVCIGLLLVLVQLAFPSSFAL. D75 contacts Mg(2+). A Zn(2+)-binding site is contributed by D75. Residue S123 is the Phosphoserine intermediate of the active site. Phosphoserine is present on S123. 2 residues coordinate Mg(2+): D174 and T176. N-linked (GlcNAc...) asparagine glycosylation is present at N268. A Mg(2+)-binding site is contributed by E325. Zn(2+) is bound by residues D330, H334, D373, and H374. N401 carries N-linked (GlcNAc...) asparagine glycosylation. H484 is a Zn(2+) binding site.

This sequence belongs to the alkaline phosphatase family. Mg(2+) serves as cofactor. Zn(2+) is required as a cofactor.

It localises to the vacuole membrane. The protein resides in the cytoplasm. The enzyme catalyses a phosphate monoester + H2O = an alcohol + phosphate. It carries out the reaction (2E,6E)-farnesyl diphosphate + H2O = (2E,6E)-farnesol + diphosphate. The catalysed reaction is beta-D-fructose 2,6-bisphosphate + H2O = beta-D-fructose 2-phosphate + phosphate. Functionally, phosphatase with broad substrate specificity. A truncated (soluble) version of the protein is responsible for the production of (E,E)-farnesol from (E,E)-farnesyl diphosphate. Acts as a fructose-2,6-bisphosphate 6-phosphatase. The sequence is that of Repressible alkaline phosphatase (PHO8) from Saccharomyces cerevisiae (strain ATCC 204508 / S288c) (Baker's yeast).